Reading from the N-terminus, the 1503-residue chain is E3 ubiquitin-protein ligase listerin (1503 aa).

HEAT repeat units follow at residues 52-89 (SGID…ETSS), 93-129 (CYEH…KLEK), 133-170 (KGLK…ADKK), 280-318 (LNTP…SAQF), 323-345 (SLQN…HWRV), 346-384 (LQHF…NLPW), 552-589 (GDIV…TGGS), 640-663 (AENV…NEAE), 664-700 (KNVL…DFNS), 845-882 (LEKR…LDDS), 1022-1065 (TLFI…RMFR), 1078-1117 (RTLL…SLLE), 1141-1183 (AAAK…VMIS), and 1302-1340 (FKSI…KLLI). The RING-type zinc finger occupies 1446 to 1499 (CTICMMTVHQQTNQLPKVKCKQCKNRFHSNCLVSSFHTYKWFESSNQSTCPLCR).

The protein belongs to the LTN1 family. Component of the ribosome quality control complex (RQC), composed of at least the E3 ubiquitin ligase ltn1 and nemf. The complex probably also contains tcf25 as well as vcp/p97 and its ubiquitin-binding cofactors. RQC forms a stable complex with 60S ribosomal subunits.

The protein resides in the cytoplasm. It is found in the cytosol. The enzyme catalyses S-ubiquitinyl-[E2 ubiquitin-conjugating enzyme]-L-cysteine + [acceptor protein]-L-lysine = [E2 ubiquitin-conjugating enzyme]-L-cysteine + N(6)-ubiquitinyl-[acceptor protein]-L-lysine.. It participates in protein modification; protein ubiquitination. In terms of biological role, E3 ubiquitin-protein ligase. Component of the ribosome quality control complex (RQC), a ribosome-associated complex that mediates ubiquitination and extraction of incompletely synthesized nascent chains for proteasomal degradation. Ubiquitination leads to vcp/p97 recruitment for extraction and degradation of the incomplete translation product. This is E3 ubiquitin-protein ligase listerin from Caenorhabditis briggsae.